Here is a 588-residue protein sequence, read N- to C-terminus: Outer membrane transporter CdiB (588 aa).

One can recognise a POTRA domain in the interval 104–179; that stretch reads FTVSSIVVSG…GVLHITVMEG (76 aa).

The protein belongs to the TPS (TC 1.B.20) family.

The protein resides in the cell outer membrane. In terms of biological role, potential outer membrane protein component of a toxin-immunity protein module, which functions as a cellular contact-dependent growth inhibition (CDI) system. CDI modules allow bacteria to communicate with and inhibit the growth of closely related neighboring bacteria in a contact-dependent fashion. This protein may be required for secretion and assembly of the CdiA toxin protein. Inhibitory cells must be in logarithmic (not stationary) phase to inhibit growth of their targets, while the presence of P or S but not type 1 pili protects the target cells against growth inhibition. Functionally, probable member of a two partner secretion pathway (TPS) in which it mediates the secretion of CdiA. This is Outer membrane transporter CdiB from Escherichia coli.